Here is a 136-residue protein sequence, read N- to C-terminus: Cytokine-like protein 1 (136 aa).

Positions 1–22 are cleaved as a signal peptide; the sequence is MRTPGPLPVLLLLLAGAPAARP.

As to expression, specifically expressed in CD34+ hematopoietic cells.

The protein resides in the secreted. The polypeptide is Cytokine-like protein 1 (CYTL1) (Homo sapiens (Human)).